The chain runs to 151 residues: Regulatory protein RecX (151 aa).

Belongs to the RecX family.

The protein resides in the cytoplasm. Modulates RecA activity. This chain is Regulatory protein RecX, found in Actinobacillus pleuropneumoniae serotype 5b (strain L20).